We begin with the raw amino-acid sequence, 191 residues long: Calcium and integrin-binding protein 1 (191 aa).

Glycine 2 carries N-myristoyl glycine lipidation. EF-hand domains are found at residues 103–138 (TPDI…LTGE) and 148–183 (EMKQ…SPDF). Residues aspartate 116, aspartate 118, aspartate 120, threonine 122, aspartate 127, aspartate 161, aspartate 163, aspartate 165, threonine 167, and glutamate 172 each coordinate Ca(2+).

In terms of assembly, monomer. Interacts with the heterodimeric integrin alpha-IIb/beta3 (ITGA2B-ITGB3). Interacts with ITGA2B (via cytoplasmic domain); the interaction is direct and calcium-dependent. Interacts with the protein kinases PLK2/SNK and PRKDC (via the region immediately upstream of the kinase domain). Interacts with PLK3; the interaction inhibits PLK3 kinase activity. Interacts with PSEN2. Interacts (via C-terminus) with F8. Interacts with NBR1 (via C-terminus). Interacts with FEZ1 (via C-terminus). Interacts with UBR5 (via C-terminus); the interaction is sensitive to DNA damage, and may target CIB1 for ubiquitin-mediated degradation. Interacts with IFI6; the interaction is direct. Interacts with BCL2. Interacts with ITPR3; the interaction occurs in a calcium dependent manner. Interacts with PTK2/FAK1. Interacts with MAP3K5; the interaction inhibits MAP3K5 activation by phosphorylation, and its subsequent interaction with TRAF2. Interacts (via C-terminal region) with STMN2 (via the N-terminal region); the interaction is direct, occurs in a calcium-dependent manner and attenuates the STMN2-induced neurite outgrowth inhibition. Interacts with SPHK1, the interaction occurs in a calcium-dependent manner. Interacts with ITGA2B (via C-terminal cytoplasmic tail); the interaction occurs upon platelet aggregation and is stabilized/increased in a calcium and magnesium-dependent manner. Interacts with PAK1 (via N-terminal region); the interaction is direct and occurs in a calcium-dependent manner. Interacts with RAC3 (via C-terminal region); the interaction induces their association with the cytoskeleton upon alpha-IIb/beta3 integrin-mediated adhesion. Interacts with ITGA5 and ITGAV. Interacts with MYO1C. Interacts with ITGA2B (via C-terminal cytoplasmic tail region). Interacts (via C-terminal region) with PPP3R1; the interaction increases upon cardiomyocytes hypertrophy. Interacts with CACNA1C; the interaction increases upon cardiomyocytes hypertrophy. Interacts with TAS1R2 (via C-terminus); this interaction is independent of the myristoylation state of CIB1. Interacts and forms a complex with TMC6 and TMC8; the interaction stabilizes each component of the complex. Expressed in cardiomyocytes and neurons (at protein level). Expressed during early neural development.

It localises to the membrane. The protein localises to the cell membrane. The protein resides in the sarcolemma. It is found in the apical cell membrane. Its subcellular location is the cell projection. It localises to the ruffle membrane. The protein localises to the filopodium tip. The protein resides in the growth cone. It is found in the lamellipodium. Its subcellular location is the cytoplasm. It localises to the cytoskeleton. The protein localises to the microtubule organizing center. The protein resides in the centrosome. It is found in the perinuclear region. Its subcellular location is the nucleus. It localises to the neuron projection. The protein localises to the perikaryon. Calcium-binding protein that plays a role in the regulation of numerous cellular processes, such as cell differentiation, cell division, cell proliferation, cell migration, thrombosis, angiogenesis, cardiac hypertrophy and apoptosis. Involved in bone marrow megakaryocyte differentiation by negatively regulating thrombopoietin-mediated signaling pathway. Participates in the endomitotic cell cycle of megakaryocyte, a form of mitosis in which both karyokinesis and cytokinesis are interrupted. Plays a role in integrin signaling by negatively regulating alpha-IIb/beta3 activation in thrombin-stimulated megakaryocytes preventing platelet aggregation. Up-regulates PTK2/FAK1 activity, and is also needed for the recruitment of PTK2/FAK1 to focal adhesions; it thus appears to play an important role in focal adhesion formation. Positively regulates cell migration on fibronectin in a CDC42-dependent manner, the effect being negatively regulated by PAK1. Functions as a negative regulator of stress activated MAP kinase (MAPK) signaling pathways. Down-regulates inositol 1,4,5-trisphosphate receptor-dependent calcium signaling. Involved in sphingosine kinase SPHK1 translocation to the plasma membrane in a N-myristoylation-dependent manner preventing TNF-alpha-induced apoptosis. Regulates serine/threonine-protein kinase PLK3 activity for proper completion of cell division progression. Plays a role in microtubule (MT) dynamics during neuronal development; disrupts the MT depolymerization activity of STMN2 attenuating NGF-induced neurite outgrowth and the MT reorganization at the edge of lamellipodia. Promotes cardiomyocyte hypertrophy via activation of the calcineurin/NFAT signaling pathway. Stimulates calcineurin PPP3R1 activity by mediating its anchoring to the sarcolemma. In ischemia-induced (pathological or adaptive) angiogenesis, stimulates endothelial cell proliferation, migration and microvessel formation by activating the PAK1 and ERK1/ERK2 signaling pathway. Also promotes cancer cell survival and proliferation. May regulate cell cycle and differentiation of spermatogenic germ cells, and/or differentiation of supporting Sertoli cells. Forms a complex with TMC6/EVER1 and TMC8/EVER2 in lymphocytes and keratynocytes where CIB1 stabilizes TMC6 and TMC8 levels and reciprocally. The sequence is that of Calcium and integrin-binding protein 1 (Cib1) from Rattus norvegicus (Rat).